The primary structure comprises 551 residues: Scaffold protein OPG125 (551 aa).

It belongs to the orthopoxvirus protein OPG125 family. Homotrimer. Self-assembles to form a layer. Interacts with OPG158 (via N-terminus); this interaction is necessary for OPG125 association with membranes.

The protein resides in the membrane. Scaffold protein which forms a transitory spherical honeycomb lattice providing curvature and rigidity to the convex membrane of crescent and immature virions (IV). This association occurs concomitantly with viral membrane formation. Targeted by the drug rifampicin, which prevents the formation of this lattice, and hence virus morphogenesis. In the presence of rifampicin, irregularly shaped membranes that lack the honeycomb layer accumulate around areas of electron-dense viroplasm. This layer is lost from virions during maturation from IV to mature virion (MV), through the proteolysis of OPG158 N-terminus. The chain is Scaffold protein OPG125 (OPG125) from Vaccinia virus (strain Ankara) (VACV).